Consider the following 179-residue polypeptide: Interleukin-10 (179 aa).

A signal peptide spans Met1 to Ala19. Disulfide bonds link Cys31–Cys127 and Cys81–Cys133. The N-linked (GlcNAc...) asparagine glycan is linked to Asn135.

Belongs to the IL-10 family. Homodimer. Interacts with IL10RA and IL10RB.

It localises to the secreted. Functionally, major immune regulatory cytokine that acts on many cells of the immune system where it has profound anti-inflammatory functions, limiting excessive tissue disruption caused by inflammation. Mechanistically, IL10 binds to its heterotetrameric receptor comprising IL10RA and IL10RB leading to JAK1 and STAT2-mediated phosphorylation of STAT3. In turn, STAT3 translocates to the nucleus where it drives expression of anti-inflammatory mediators. Targets antigen-presenting cells (APCs) such as macrophages and monocytes and inhibits their release of pro-inflammatory cytokines including granulocyte-macrophage colony-stimulating factor /GM-CSF, granulocyte colony-stimulating factor/G-CSF, IL-1 alpha, IL-1 beta, IL-6, IL-8 and TNF-alpha. Also interferes with antigen presentation by reducing the expression of MHC-class II and co-stimulatory molecules, thereby inhibiting their ability to induce T cell activation. In addition, controls the inflammatory response of macrophages by reprogramming essential metabolic pathways including mTOR signaling. In Bubalus carabanensis (Swamp type water buffalo), this protein is Interleukin-10 (IL10).